The chain runs to 1770 residues: Transposon Ty2-C Gag-Pol polyprotein (1770 aa).

Composition is skewed to polar residues over residues 1-11 (MESQQLHQNPR), 19-39 (ASVTSKEVPSNQDPLAVSASN), and 49-60 (KVNSQQETTPGT). Disordered regions lie at residues 1–88 (MESQ…YQQH) and 355–453 (SQYK…LPDH). The segment at 295–397 (ENNINVSDRL…SSKPRAAKAH (103 aa)) is RNA-binding. Positions 369 to 382 (TSPNTTNTKVTTRN) are enriched in low complexity. Polar residues-rich tracts occupy residues 399–408 (IATSSKFSRV) and 415–435 (ESTVSSQYLSDDNELSLGQQQ). Asp457 serves as the catalytic For protease activity; shared with dimeric partner. The integrase-type zinc finger-like stretch occupies residues 579 to 636 (NVNKSKSVNKYPYPLIHRMLGHANFRSIQKSLKKNAVTYLKESDIEWSNASTYQCPDC). The region spanning 656–831 (ESYEPFQYLH…AGLDITTILP (176 aa)) is the Integrase catalytic domain. Mg(2+) contacts are provided by Asp667 and Asp732. Disordered regions lie at residues 1003-1038 (EMGGTVESDTTSPRHSSTFTARNQKRPGSPNDMIDL) and 1057-1205 (GGTE…TEIE). Polar residues-rich tracts occupy residues 1009 to 1024 (ESDTTSPRHSSTFTAR) and 1065 to 1082 (QRNSDTNIKYRTTNSTPS). The short motif at 1193 to 1227 (KKRSLEDNETEIEVSRDTWNNKNMRSLEPPRSKKR) is the Bipartite nuclear localization signal element. The Reverse transcriptase Ty1/copia-type domain maps to 1353–1491 (NDYYITQLDI…DILGLEIKYQ (139 aa)). Residues Asp1361, Asp1442, Asp1443, Asp1625, Glu1667, and Asp1700 each contribute to the Mg(2+) site. Positions 1625 to 1767 (DASYGNQPYY…IKTFKLLTNK (143 aa)) constitute an RNase H Ty1/copia-type domain.

In terms of assembly, the capsid protein forms a homotrimer, from which the VLPs are assembled. The protease is a homodimer, whose active site consists of two apposed aspartic acid residues. In terms of processing, initially, virus-like particles (VLPs) are composed of the structural unprocessed proteins Gag and Gag-Pol, and also contain the host initiator methionine tRNA (tRNA(i)-Met) which serves as a primer for minus-strand DNA synthesis, and a dimer of genomic Ty RNA. Processing of the polyproteins occurs within the particle and proceeds by an ordered pathway, called maturation. First, the protease (PR) is released by autocatalytic cleavage of the Gag-Pol polyprotein, and this cleavage is a prerequisite for subsequent processing at the remaining sites to release the mature structural and catalytic proteins. Maturation takes place prior to the RT reaction and is required to produce transposition-competent VLPs.

It is found in the cytoplasm. It localises to the nucleus. The catalysed reaction is DNA(n) + a 2'-deoxyribonucleoside 5'-triphosphate = DNA(n+1) + diphosphate. It carries out the reaction Endonucleolytic cleavage to 5'-phosphomonoester.. Capsid protein (CA) is the structural component of the virus-like particle (VLP), forming the shell that encapsulates the retrotransposons dimeric RNA genome. The particles are assembled from trimer-clustered units and there are holes in the capsid shells that allow for the diffusion of macromolecules. CA also has nucleocapsid-like chaperone activity, promoting primer tRNA(i)-Met annealing to the multipartite primer-binding site (PBS), dimerization of Ty2 RNA and initiation of reverse transcription. Its function is as follows. The aspartyl protease (PR) mediates the proteolytic cleavages of the Gag and Gag-Pol polyproteins after assembly of the VLP. In terms of biological role, reverse transcriptase/ribonuclease H (RT) is a multifunctional enzyme that catalyzes the conversion of the retro-elements RNA genome into dsDNA within the VLP. The enzyme displays a DNA polymerase activity that can copy either DNA or RNA templates, and a ribonuclease H (RNase H) activity that cleaves the RNA strand of RNA-DNA heteroduplexes during plus-strand synthesis and hydrolyzes RNA primers. The conversion leads to a linear dsDNA copy of the retrotransposon that includes long terminal repeats (LTRs) at both ends. Functionally, integrase (IN) targets the VLP to the nucleus, where a subparticle preintegration complex (PIC) containing at least integrase and the newly synthesized dsDNA copy of the retrotransposon must transit the nuclear membrane. Once in the nucleus, integrase performs the integration of the dsDNA into the host genome. The chain is Transposon Ty2-C Gag-Pol polyprotein (TY2B-C) from Saccharomyces cerevisiae (strain ATCC 204508 / S288c) (Baker's yeast).